We begin with the raw amino-acid sequence, 337 residues long: CMRF35-like molecule 1 (337 aa).

The first 19 residues, 1-19 (MHLSLLVPFLFWITGCCTA), serve as a signal peptide directing secretion. The 106-residue stretch at 20-125 (EDPVTGPEEV…LDPMFKVTVN (106 aa)) folds into the Ig-like V-type domain. The Extracellular segment spans residues 20-193 (EDPVTGPEEV…GVGDGFLDLS (174 aa)). The tract at residues 39-45 (VQCRYTS) is plays an important role in murine norovirus (MNV) binding. 2 disulfide bridges follow: C41–C109 and C55–C63. A helical transmembrane segment spans residues 194-214 (VLLPVISAVLLLLLLVASLFA). The Cytoplasmic segment spans residues 215-337 (WRMVRRQKKA…IRRPLPAAMP (123 aa)). Disordered regions lie at residues 248–270 (QPRTSPGSSWKKGSSMSSSGKDH) and 318–337 (LEEETTEYSSIRRPLPAAMP). Positions 252-266 (SPGSSWKKGSSMSSS) are enriched in low complexity.

Belongs to the CD300 family. In terms of assembly, interacts with PTPN6/SHP-1 in a tyrosine phosphorylation dependent manner. Interacts with IL4R. In terms of processing, phosphorylated on tyrosine. As to expression, expressed in myeloid cells. Present on the surface of macrophages (at protein level). Highly expressed by alveolar, splenic macrophages and bone marrow-derived dendritic cells. Expression is increased following aeroallergen challenge in macrophages, mast cells, and eosinophils.

Its subcellular location is the cell membrane. In terms of biological role, acts as an inhibitory receptor for myeloid cells and mast cells. Positively regulates the phagocytosis of apoptotic cells (efferocytosis) via phosphatidylserine (PS) recognition; recognizes and binds PS as a ligand which is expressed on the surface of apoptotic cells. Plays an important role in the maintenance of immune homeostasis, by promoting macrophage-mediated efferocytosis and by inhibiting dendritic cell-mediated efferocytosis. Negatively regulates Fc epsilon receptor-dependent mast cell activation and allergic responses via binding to ceramide which acts as a ligand. May act as a coreceptor for interleukin 4 (IL-4). Associates with and regulates IL-4 receptor alpha-mediated responses by augmenting IL-4- and IL-13-induced signaling. Negatively regulates the Toll-like receptor (TLR) signaling mediated by MYD88 and TRIF through activation of PTPN6/SHP-1 and PTPN11/SHP-2. Inhibits osteoclast formation. Induces macrophage cell death upon engagement. Functionally, (Microbial infection) Acts as a functional receptor for murine norovirus (MNV). Mediates binding to the cell surface and is both necessary and sufficient for viral entry and replication. This interaction requires Mg(2+) and Ca(2+) and is enhanced by bile acids. Primary determinant of MNV species tropism and is sufficient to render cells permissive to infection by MNV. Can render nonmurine mammalian cells susceptible to MNV infection. The sequence is that of CMRF35-like molecule 1 (Cd300lf) from Mus musculus (Mouse).